The chain runs to 406 residues: MTFPVEKVRADFPILQREVNGLPLAYLDSAASAQKPNQVIDAESAFYRHGYAAVHRGIHTLSAQATESMENVRKQASRFINARSAEELVFVRGTTEGINLVANSWGTENIRAGDNIIISEMEHHANIVPWQMLCERKGAELRVIPLHPDGTLRLETLAALFDDRTRLLAITHVSNVLGTENPLPDMIALARQHGAKVLVDGAQAVMHHAVDVQALDCDFYVFSGHKLYGPTGIGILYVKEALLQEMPPWEGGGSMISTVSLTQGTTWAKAPWRFEAGTPNTGGIIGLGAAIDYVTSLGLDKIGDYEQMLMRYALEQLAQVPDITLYGPAQRLGVIAFNLGNHHAYDVGSFLDNYGIAVRTGHHCAMPLMAWYGVPAMCRASLAMYNTHEEVDRLVAGLTRIHRLLG.

Lysine 226 carries the N6-(pyridoxal phosphate)lysine modification. Cysteine 364 serves as the catalytic Cysteine persulfide intermediate.

This sequence belongs to the class-V pyridoxal-phosphate-dependent aminotransferase family. Csd subfamily. In terms of assembly, homodimer. Interacts with SufE and the SufBCD complex composed of SufB, SufC and SufD. The interaction with SufE is required to mediate the direct transfer of the sulfur atom from the S-sulfanylcysteine. It depends on pyridoxal 5'-phosphate as a cofactor.

It is found in the cytoplasm. It carries out the reaction (sulfur carrier)-H + L-cysteine = (sulfur carrier)-SH + L-alanine. The catalysed reaction is L-selenocysteine + AH2 = hydrogenselenide + L-alanine + A + H(+). The protein operates within cofactor biosynthesis; iron-sulfur cluster biosynthesis. Its function is as follows. Cysteine desulfurases mobilize the sulfur from L-cysteine to yield L-alanine, an essential step in sulfur metabolism for biosynthesis of a variety of sulfur-containing biomolecules. Component of the suf operon, which is activated and required under specific conditions such as oxidative stress and iron limitation. Acts as a potent selenocysteine lyase in vitro, that mobilizes selenium from L-selenocysteine. Selenocysteine lyase activity is however unsure in vivo. The protein is Cysteine desulfurase of Salmonella agona (strain SL483).